We begin with the raw amino-acid sequence, 243 residues long: Probable intron-encoded endonuclease aI3 (243 aa).

Belongs to the LAGLIDADG endonuclease family.

It localises to the mitochondrion. Its function is as follows. Mitochondrial DNA endonuclease involved in intron homing. The protein is Probable intron-encoded endonuclease aI3 (aI3) of Dictyostelium citrinum (Slime mold).